The chain runs to 356 residues: S-adenosylmethionine:tRNA ribosyltransferase-isomerase (356 aa).

The protein belongs to the QueA family. As to quaternary structure, monomer.

It is found in the cytoplasm. It carries out the reaction 7-aminomethyl-7-carbaguanosine(34) in tRNA + S-adenosyl-L-methionine = epoxyqueuosine(34) in tRNA + adenine + L-methionine + 2 H(+). It functions in the pathway tRNA modification; tRNA-queuosine biosynthesis. In terms of biological role, transfers and isomerizes the ribose moiety from AdoMet to the 7-aminomethyl group of 7-deazaguanine (preQ1-tRNA) to give epoxyqueuosine (oQ-tRNA). This Escherichia coli O127:H6 (strain E2348/69 / EPEC) protein is S-adenosylmethionine:tRNA ribosyltransferase-isomerase.